The sequence spans 415 residues: Multidrug resistance protein MdtA (415 aa).

A signal peptide spans 1 to 21 (MKGSYKSRWVIVIVVVIAAIA). Disordered regions lie at residues 32 to 59 (SRSAAPGATKQAQQSPAGGRRGMRSGPL) and 392 to 415 (EAQSATTSEEKATSREYAKKGARS). Positions 399–415 (SEEKATSREYAKKGARS) are enriched in basic and acidic residues.

It belongs to the membrane fusion protein (MFP) (TC 8.A.1) family. Part of a tripartite efflux system composed of MdtA, MdtB and MdtC.

It is found in the cell inner membrane. In terms of biological role, the MdtABC tripartite complex confers resistance against novobiocin and deoxycholate. In Escherichia coli (strain SMS-3-5 / SECEC), this protein is Multidrug resistance protein MdtA.